We begin with the raw amino-acid sequence, 656 residues long: Heat shock 70 kDa protein, mitochondrial (656 aa).

The transit peptide at 1–23 (MFARRLRGAGSLAAASLARWQSS) directs the protein to the mitochondrion. The tract at residues 624-656 (EYQQAAAGNSSSSSGNTDSSQGEQQQQGDQQKQ) is disordered. Over residues 626 to 656 (QQAAAGNSSSSSGNTDSSQGEQQQQGDQQKQ) the composition is skewed to low complexity.

It belongs to the heat shock protein 70 family.

It localises to the mitochondrion matrix. The protein resides in the kinetoplast. May participate in eukaryotic mitochondrial DNA replication. This is Heat shock 70 kDa protein, mitochondrial (MTP70) from Trypanosoma cruzi.